The sequence spans 331 residues: Anthranilate phosphoribosyltransferase (331 aa).

Residues G79, 82-83 (GD), S87, 89-92 (NIST), 107-115 (KHCNSSISG), and S119 contribute to the 5-phospho-alpha-D-ribose 1-diphosphate site. G79 contributes to the anthranilate binding site. S91 serves as a coordination point for Mg(2+). Anthranilate is bound at residue N110. R165 contacts anthranilate. The Mg(2+) site is built by D223 and E224.

It belongs to the anthranilate phosphoribosyltransferase family. As to quaternary structure, homodimer. Mg(2+) is required as a cofactor.

The enzyme catalyses N-(5-phospho-beta-D-ribosyl)anthranilate + diphosphate = 5-phospho-alpha-D-ribose 1-diphosphate + anthranilate. Its pathway is amino-acid biosynthesis; L-tryptophan biosynthesis; L-tryptophan from chorismate: step 2/5. Catalyzes the transfer of the phosphoribosyl group of 5-phosphorylribose-1-pyrophosphate (PRPP) to anthranilate to yield N-(5'-phosphoribosyl)-anthranilate (PRA). This is Anthranilate phosphoribosyltransferase from Buchnera aphidicola subsp. Melaphis rhois.